The following is an 82-amino-acid chain: Small ribosomal subunit protein bS18 (82 aa).

The interval methionine 1–cysteine 20 is disordered.

This sequence belongs to the bacterial ribosomal protein bS18 family. Part of the 30S ribosomal subunit. Forms a tight heterodimer with protein bS6.

Binds as a heterodimer with protein bS6 to the central domain of the 16S rRNA, where it helps stabilize the platform of the 30S subunit. The protein is Small ribosomal subunit protein bS18 of Brucella suis (strain ATCC 23445 / NCTC 10510).